Consider the following 149-residue polypeptide: Protein E6 (149 aa).

2 zinc fingers span residues cysteine 30–cysteine 66 and cysteine 103–cysteine 139. The PDZ-binding domain signature appears at threonine 147–leucine 149.

This sequence belongs to the papillomaviridae E6 protein family. As to quaternary structure, forms homodimers. Interacts with ubiquitin-protein ligase UBE3A/E6-AP and thus forms a complex with human TP53. Interacts with human NFX1 and MAGI3. Interacts with human IRF3; this interaction inhibits the establishment of antiviral state. Interacts with human TYK2; this interaction inhibits JAK-STAT activation by interferon alpha. Interacts with host DLG1; this interaction leads to the proteasomal degradation of DLG1.

It localises to the host cytoplasm. It is found in the host nucleus. Its function is as follows. This protein may be involved in the oncogenic potential of this virus (cervical neoplasia-associated virus). Plays a major role in the induction and maintenance of cellular transformation. Acts mainly as an oncoprotein by stimulating the destruction of many host cell key regulatory proteins. E6 associates with host UBE3A/E6-AP ubiquitin-protein ligase, and inactivates tumor suppressors TP53 and TP73 by targeting them to the 26S proteasome for degradation. In turn, DNA damage and chromosomal instabilities increase and lead to cell proliferation and cancer development. The complex E6/E6AP targets several other substrates to degradation via the proteasome including host DLG1 or NFX1, a repressor of human telomerase reverse transcriptase (hTERT). The resulting increased expression of hTERT prevents the shortening of telomere length leading to cell immortalization. Other cellular targets including BAK1, Fas-associated death domain-containing protein (FADD) and procaspase 8, are degraded by E6/E6AP causing inhibition of apoptosis. E6 also inhibits immune response by interacting with host IRF3 and TYK2. These interactions prevent IRF3 transcriptional activities and inhibit TYK2-mediated JAK-STAT activation by interferon alpha resulting in inhibition of the interferon signaling pathway. The polypeptide is Protein E6 (Homo sapiens (Human)).